Here is a 467-residue protein sequence, read N- to C-terminus: Uronate isomerase (467 aa).

It belongs to the metallo-dependent hydrolases superfamily. Uronate isomerase family.

The catalysed reaction is D-glucuronate = D-fructuronate. The enzyme catalyses aldehydo-D-galacturonate = keto-D-tagaturonate. It participates in carbohydrate metabolism; pentose and glucuronate interconversion. This Solibacter usitatus (strain Ellin6076) protein is Uronate isomerase.